A 151-amino-acid polypeptide reads, in one-letter code: Secreted RxLR effector protein 30 (151 aa).

Positions 1–19 are cleaved as a signal peptide; the sequence is MRSSTILIVLGIAILAVNG. Positions 38-53 match the RxLR-dEER motif; sequence RLLRSTSTEHETDEER.

Belongs to the RxLR effector family.

It localises to the secreted. The protein resides in the host nucleus. Functionally, effector that acts as a broad suppressor of cell death to interrupt plant immunity. Inhibits cell death induced by cell death-inducing proteins, including the PAMP elicitor INF1 from P.infestans. This is Secreted RxLR effector protein 30 from Plasmopara viticola (Downy mildew of grapevine).